Here is a 610-residue protein sequence, read N- to C-terminus: Zinc metalloproteinase-disintegrin-like VAP1 (610 aa).

An N-terminal signal peptide occupies residues 1 to 20 (MIQVLLVTISLAVFPYQGSS). Positions 21–189 (VILESGNVND…KKASQSNLTP (169 aa)) are excised as a propeptide. At glutamate 190 the chain carries Pyrrolidone carboxylic acid (Glu). The Peptidase M12B domain occupies 199–395 (KYVKLFLVAD…NMPQCILKKP (197 aa)). Asparagine 218 carries an N-linked (GlcNAc...) asparagine glycan. 3 cysteine pairs are disulfide-bonded: cysteine 310/cysteine 390, cysteine 350/cysteine 374, and cysteine 352/cysteine 357. Histidine 335 lines the Zn(2+) pocket. The short motif at 335–346 (HEMGHNLGMDHD) is the Metal-binding element. Glutamate 336 serves as the catalytic Proton acceptor. The Zn(2+) site is built by histidine 339 and histidine 345. Positions 403–488 (PAVCGNYFVE…AECTDRFQRN (86 aa)) constitute a Disintegrin domain. Ca(2+) is bound by residues valine 405, asparagine 408, phenylalanine 410, glutamate 412, glutamate 415, and aspartate 418. Cystine bridges form between cysteine 406-cysteine 435, cysteine 417-cysteine 430, cysteine 419-cysteine 425, cysteine 429-cysteine 452, cysteine 443-cysteine 449, cysteine 448-cysteine 474, cysteine 461-cysteine 481, cysteine 468-cysteine 499, cysteine 492-cysteine 504, cysteine 511-cysteine 561, cysteine 526-cysteine 572, cysteine 539-cysteine 549, cysteine 556-cysteine 598, and cysteine 592-cysteine 603. Residues 467–469 (ECD) carry the D/ECD-tripeptide motif. Aspartate 469, methionine 470, aspartate 472, aspartate 483, and arginine 484 together coordinate Ca(2+).

The protein belongs to the venom metalloproteinase (M12B) family. P-III subfamily. P-IIIc sub-subfamily. Homodimer; disulfide-linked. The cofactor is Zn(2+). In terms of processing, the N-terminus is blocked. Expressed by the venom gland.

It is found in the secreted. With respect to regulation, inhibited by EDTA and EGTA, but not by PMSF. Its function is as follows. Zinc metalloprotease that has fibrinogenolytic and hemorrhagic activities. It induces apoptosis in vascular endothelial cells (VEC), without degrading extracellular matrix (it cannot cleave collagen) or inhibiting adhesion of VEC. VAP1-induced apoptosis is inhibited by antibodies for integrin alpha-3, alpha-6, beta-1 and CD9. Apoptosis is accompanied by severe cell fragmentation, which is controlled by caspases. In Crotalus atrox (Western diamondback rattlesnake), this protein is Zinc metalloproteinase-disintegrin-like VAP1.